We begin with the raw amino-acid sequence, 475 residues long: Aspartyl/glutamyl-tRNA(Asn/Gln) amidotransferase subunit B (475 aa).

Belongs to the GatB/GatE family. GatB subfamily. Heterotrimer of A, B and C subunits.

The enzyme catalyses L-glutamyl-tRNA(Gln) + L-glutamine + ATP + H2O = L-glutaminyl-tRNA(Gln) + L-glutamate + ADP + phosphate + H(+). It catalyses the reaction L-aspartyl-tRNA(Asn) + L-glutamine + ATP + H2O = L-asparaginyl-tRNA(Asn) + L-glutamate + ADP + phosphate + 2 H(+). In terms of biological role, allows the formation of correctly charged Asn-tRNA(Asn) or Gln-tRNA(Gln) through the transamidation of misacylated Asp-tRNA(Asn) or Glu-tRNA(Gln) in organisms which lack either or both of asparaginyl-tRNA or glutaminyl-tRNA synthetases. The reaction takes place in the presence of glutamine and ATP through an activated phospho-Asp-tRNA(Asn) or phospho-Glu-tRNA(Gln). This chain is Aspartyl/glutamyl-tRNA(Asn/Gln) amidotransferase subunit B, found in Thermoanaerobacter sp. (strain X514).